A 199-amino-acid chain; its full sequence is ATP-dependent Clp protease proteolytic subunit (199 aa).

Residues 1-23 are disordered; sequence MTTSAARKGLRTRGSACPRATRS. Catalysis depends on serine 100, which acts as the Nucleophile. Histidine 125 is a catalytic residue.

This sequence belongs to the peptidase S14 family. As to quaternary structure, fourteen ClpP subunits assemble into 2 heptameric rings which stack back to back to give a disk-like structure with a central cavity, resembling the structure of eukaryotic proteasomes.

Its subcellular location is the cytoplasm. The enzyme catalyses Hydrolysis of proteins to small peptides in the presence of ATP and magnesium. alpha-casein is the usual test substrate. In the absence of ATP, only oligopeptides shorter than five residues are hydrolyzed (such as succinyl-Leu-Tyr-|-NHMec, and Leu-Tyr-Leu-|-Tyr-Trp, in which cleavage of the -Tyr-|-Leu- and -Tyr-|-Trp bonds also occurs).. Functionally, cleaves peptides in various proteins in a process that requires ATP hydrolysis. Has a chymotrypsin-like activity. Plays a major role in the degradation of misfolded proteins. The chain is ATP-dependent Clp protease proteolytic subunit from Paracoccus denitrificans.